The chain runs to 372 residues: Probable basic-leucine zipper transcription factor G (372 aa).

Disordered regions lie at residues 1-20 (MLSV…QQQQ) and 176-234 (TTNN…EKFE). 2 stretches are compositionally biased toward low complexity: residues 11 to 20 (QQPQQQQQQQ) and 176 to 215 (TTNN…KSNT). Residues 223-234 (IRNSNSTFEKFE) are compositionally biased toward polar residues. The 64-residue stretch at 277–340 (ELKRQKRLIK…LILKAEVGQL (64 aa)) folds into the bZIP domain. Positions 279-301 (KRQKRLIKNRESAHLSRQRKRER) are basic motif. The leucine-zipper stretch occupies residues 305–340 (LEHRVEELSSNSIDINKTLSSLENENLILKAEVGQL).

The protein belongs to the bZIP family.

It is found in the nucleus. In terms of biological role, probable transcriptional regulator. The protein is Probable basic-leucine zipper transcription factor G (bzpG) of Dictyostelium discoideum (Social amoeba).